Here is a 532-residue protein sequence, read N- to C-terminus: MIARLAGRIILLSGWRRALAAFLSGAFATLTQPPFDIFVAGFVSFPVLVWLIDGAIARTDAGPLRRLLPAAKVGWWFGFGYFVSGLWWIGTALLVDADQFAWALPLAVLGLPAFLALFYAFAAMIARLLWSDGLGRILALAFGFALAEWLRTFIFTGFPWNLIGYAAMPVPLLMQSVAVIGLVGMSALAVFVFAAPALLTGGHFARTGIGLAIFLALAHVGFGAWTLSRAPAIVDENGPLAVRIVQPSIAQAMKWDNAERRAIFDKLVGLTEEAPAEGKPRPDVIVWPETAIPYILESTPQALAHIGDALQEGQVLLAGAVREEKGADGGEPRYYNSIYTIDDRGRIVSTADKVHLVPFGEYLPFESFLRGLGLQEVVEMPGGFTAGTTRHALAVKDGRSFLPLICYEAIFPDELGYEGAGASAIINVTNDAWYGDTPGPYQHFRQAQVRAVEQGLPLIRAANNGLSAIVNTYGRITGSLALDAVGVVDSYLPSPRDPFWGRPPGWIQTVLILLTLLAASVGLILYSRRRFH.

6 consecutive transmembrane segments (helical) span residues 37–57 (IFVAGFVSFPVLVWLIDGAIA), 75–95 (WWFGFGYFVSGLWWIGTALLV), 106–126 (LAVLGLPAFLALFYAFAAMIA), 128–148 (LLWSDGLGRILALAFGFALAE), 179–199 (VIGLVGMSALAVFVFAAPALL), and 207–227 (TGIGLAIFLALAHVGFGAWTL). The CN hydrolase domain maps to 245 to 494 (VQPSIAQAMK…VGVVDSYLPS (250 aa)). Glu289 acts as the Proton acceptor in catalysis. The active site involves Lys353. Cys406 functions as the Nucleophile in the catalytic mechanism. Residues 505-525 (GWIQTVLILLTLLAASVGLIL) traverse the membrane as a helical segment.

Belongs to the CN hydrolase family. Apolipoprotein N-acyltransferase subfamily.

It localises to the cell inner membrane. It catalyses the reaction N-terminal S-1,2-diacyl-sn-glyceryl-L-cysteinyl-[lipoprotein] + a glycerophospholipid = N-acyl-S-1,2-diacyl-sn-glyceryl-L-cysteinyl-[lipoprotein] + a 2-acyl-sn-glycero-3-phospholipid + H(+). Its pathway is protein modification; lipoprotein biosynthesis (N-acyl transfer). Its function is as follows. Catalyzes the phospholipid dependent N-acylation of the N-terminal cysteine of apolipoprotein, the last step in lipoprotein maturation. The chain is Apolipoprotein N-acyltransferase from Brucella suis biovar 1 (strain 1330).